A 309-amino-acid polypeptide reads, in one-letter code: Porphobilinogen deaminase (309 aa).

At Cys-242 the chain carries S-(dipyrrolylmethanemethyl)cysteine.

The protein belongs to the HMBS family. As to quaternary structure, monomer. Requires dipyrromethane as cofactor.

It carries out the reaction 4 porphobilinogen + H2O = hydroxymethylbilane + 4 NH4(+). It participates in porphyrin-containing compound metabolism; protoporphyrin-IX biosynthesis; coproporphyrinogen-III from 5-aminolevulinate: step 2/4. Functionally, tetrapolymerization of the monopyrrole PBG into the hydroxymethylbilane pre-uroporphyrinogen in several discrete steps. The sequence is that of Porphobilinogen deaminase from Shewanella frigidimarina (strain NCIMB 400).